The chain runs to 158 residues: Crossover junction endodeoxyribonuclease RuvC (158 aa).

Residues Asp-7, Glu-67, and Asp-140 contribute to the active site. Positions 7, 67, and 140 each coordinate Mg(2+).

This sequence belongs to the RuvC family. Homodimer which binds Holliday junction (HJ) DNA. The HJ becomes 2-fold symmetrical on binding to RuvC with unstacked arms; it has a different conformation from HJ DNA in complex with RuvA. In the full resolvosome a probable DNA-RuvA(4)-RuvB(12)-RuvC(2) complex forms which resolves the HJ. It depends on Mg(2+) as a cofactor.

It is found in the cytoplasm. The catalysed reaction is Endonucleolytic cleavage at a junction such as a reciprocal single-stranded crossover between two homologous DNA duplexes (Holliday junction).. In terms of biological role, the RuvA-RuvB-RuvC complex processes Holliday junction (HJ) DNA during genetic recombination and DNA repair. Endonuclease that resolves HJ intermediates. Cleaves cruciform DNA by making single-stranded nicks across the HJ at symmetrical positions within the homologous arms, yielding a 5'-phosphate and a 3'-hydroxyl group; requires a central core of homology in the junction. The consensus cleavage sequence is 5'-(A/T)TT(C/G)-3'. Cleavage occurs on the 3'-side of the TT dinucleotide at the point of strand exchange. HJ branch migration catalyzed by RuvA-RuvB allows RuvC to scan DNA until it finds its consensus sequence, where it cleaves and resolves the cruciform DNA. The chain is Crossover junction endodeoxyribonuclease RuvC from Dictyoglomus thermophilum (strain ATCC 35947 / DSM 3960 / H-6-12).